A 210-amino-acid polypeptide reads, in one-letter code: A-kinase-interacting protein 1 (210 aa).

2 disordered regions span residues 58–80 and 136–162; these read HLEKQPAAGPQRVLPGEREERPP and QRKDRKKTSLGPGGSYQISEHAPEASQ.

Interacts with PRKACA and RELA. In terms of tissue distribution, expressed at high levels in adult heart and at lower levels in brain, testis, ovary and skeletal muscle. Up-regulated in some breast cancer cell lines. Isoform 1 and isoform 3 are expressed in fetal brain.

It is found in the nucleus. Enhances NF-kappa-B transcriptional activity by regulating the nuclear localization of the NF-kappa-B subunit RELA and promoting the phosphorylation of RELA by PRKACA. Regulates the effect of the cAMP-dependent protein kinase signaling pathway on the NF-kappa-B activation cascade. The polypeptide is A-kinase-interacting protein 1 (AKIP1) (Homo sapiens (Human)).